The chain runs to 273 residues: Aspartate/glutamate leucyltransferase (273 aa).

Belongs to the R-transferase family. Bpt subfamily.

The protein resides in the cytoplasm. It carries out the reaction N-terminal L-glutamyl-[protein] + L-leucyl-tRNA(Leu) = N-terminal L-leucyl-L-glutamyl-[protein] + tRNA(Leu) + H(+). It catalyses the reaction N-terminal L-aspartyl-[protein] + L-leucyl-tRNA(Leu) = N-terminal L-leucyl-L-aspartyl-[protein] + tRNA(Leu) + H(+). Its function is as follows. Functions in the N-end rule pathway of protein degradation where it conjugates Leu from its aminoacyl-tRNA to the N-termini of proteins containing an N-terminal aspartate or glutamate. This chain is Aspartate/glutamate leucyltransferase, found in Ruegeria pomeroyi (strain ATCC 700808 / DSM 15171 / DSS-3) (Silicibacter pomeroyi).